A 495-amino-acid polypeptide reads, in one-letter code: Telomere-binding protein subunit alpha (495 aa).

The segment covering 1–13 (MSTAAKQNRSTSR) has biased composition (polar residues). The interval 1-31 (MSTAAKQNRSTSRVSKKKTAAPKEGAAKKSD) is disordered.

Belongs to the telombin family. Heterodimer of an alpha and a beta subunit.

It localises to the nucleus. Its subcellular location is the chromosome. The protein localises to the telomere. May function as protective capping of the single-stranded telomeric overhang. May also participate in telomere length regulation during DNA replication. Binds specifically to the T4G4-containing extension on the 3'strand and protects this region of the telomere from nuclease digestion and chemical modification. In Sterkiella nova (Ciliate), this protein is Telomere-binding protein subunit alpha (MAC-56A).